Reading from the N-terminus, the 128-residue chain is MTTSSYFLLVALGLLLYVCRSSFGSEHTCESDASPHPQGVCGSPLAEAVEAACELEESLQGGTGKKRGRASLLRKRRAFLSMLKARAKRNEASPLQRSGRGIVCECCKNHCNLEELTEYCPPVTEGSG.

The N-terminal stretch at M1–G24 is a signal peptide. Disulfide bonds link C29/C104, C41/C107, C53/C120, and C106/C111. Residues L59–R89 constitute a propeptide, c peptide. E115 bears the 4-carboxyglutamate; partial mark. S127 is modified (serine amide).

It belongs to the insulin family. In terms of assembly, heterodimer of A and B chains; disulfide-linked. As to expression, expressed by the venom gland.

It is found in the secreted. In terms of biological role, this venom insulin facilitates prey capture by rapidly inducing hypoglycemic shock. Intraperitoneal injection of this peptide into zebrafish lowers blood glucose with the same potency than human insulin. In vivo, when applied to water, this peptide reduces overall locomotor activity of zebrafish larvae, observed as a significant decrease in the percentage of time spent swimming and movement frequency. The polypeptide is Con-Ins F2b (Conus floridulus (Cone snail)).